The sequence spans 59 residues: Temporin-HN2 (59 aa).

Residues 1 to 22 form the signal peptide; the sequence is MFTLKKSLLLLLFLGTINLSLS. Residues 16 to 44 are a coiled coil; sequence TINLSLSEQERDAKEERRDEMDVEVEKRN. Residues 23–41 constitute a propeptide that is removed on maturation; that stretch reads EQERDAKEERRDEMDVEVE. Leucine amide is present on leucine 57.

In terms of tissue distribution, expressed by the skin glands.

Its subcellular location is the secreted. Functionally, has antimicrobial activity against some Gram-positive bacteria and fungi but has no activity against a range of Gram-negative bacteria except P.faecalis. Active against the Gram-positive bacteria S.aureus ATCC 25923 (MIC=4.8 uM), S.carnosus KHS (MIC=19 uM), B.licheniformis X39 (MIC=19 uM) and R.rhodochrous X15 (MIC=2.4 uM) but is inactive against E.faecium 091299 and E.faecalis 981. Has a less potent antimicrobial activity against the Gram-negative bacterium P.faecalis X29 (MIC=37.5 uM) and is inactive against E.coli, P.aeruginosa and S.typhi. Has antifungal activity against C.albicans ATCC 2002 (MIC=9.5 uM) and is also active against the slime mold 090223 (MIC=9.5 uM). Has extremely low hemolytic activity against human erythrocytes (LC(50)=300 uM). The polypeptide is Temporin-HN2 (Odorrana hainanensis (Odor frog)).